Reading from the N-terminus, the 93-residue chain is MMCISKLPAVLLILSVALNHLRATPVRSGSNPQMDKRKCNTATCATQRLANFLVRSSNNLGPVLPPTNVGSNTYGKRNAAGDPNRESLDFLLV.

A signal peptide spans 1–23 (MMCISKLPAVLLILSVALNHLRA). The propeptide occupies 24–35 (TPVRSGSNPQMD). Cysteine 39 and cysteine 44 are joined by a disulfide. Residues 64 to 93 (LPPTNVGSNTYGKRNAAGDPNRESLDFLLV) are disordered. Tyrosine 74 carries the post-translational modification Tyrosine amide. Residues 78-93 (NAAGDPNRESLDFLLV) constitute a propeptide that is removed on maturation. Residues 83-93 (PNRESLDFLLV) are compositionally biased toward basic and acidic residues.

It belongs to the calcitonin family. As to quaternary structure, can form homodimers. Interacts with IDE and INS. Interaction with INS inhibits homodimerization and fibril formation.

It is found in the secreted. Functionally, amylin/IAPP is a glucoregulatory peptide hormone that plays an important role in the regulation of energy homeostasis. Selectively inhibits insulin-stimulated glucose utilization and glycogen deposition in muscle, while not affecting adipocyte glucose metabolism. IAPP function is mediated by the CALCR-RAMPs (AMYRs) receptor complexes. Amylin can also bind CALCR receptor in the absence of RAMPs, although it is more selective for AMYRs. The sequence is that of Islet amyloid polypeptide from Mus musculus (Mouse).